We begin with the raw amino-acid sequence, 440 residues long: L-seryl-tRNA(Sec) selenium transferase (440 aa).

An N6-(pyridoxal phosphate)lysine modification is found at K282.

The protein belongs to the SelA family. Pyridoxal 5'-phosphate is required as a cofactor.

The protein resides in the cytoplasm. It carries out the reaction L-seryl-tRNA(Sec) + selenophosphate + H(+) = L-selenocysteinyl-tRNA(Sec) + phosphate. It participates in aminoacyl-tRNA biosynthesis; selenocysteinyl-tRNA(Sec) biosynthesis; selenocysteinyl-tRNA(Sec) from L-seryl-tRNA(Sec) (bacterial route): step 1/1. Its function is as follows. Converts seryl-tRNA(Sec) to selenocysteinyl-tRNA(Sec) required for selenoprotein biosynthesis. This Campylobacter jejuni subsp. doylei (strain ATCC BAA-1458 / RM4099 / 269.97) protein is L-seryl-tRNA(Sec) selenium transferase.